Consider the following 429-residue polypeptide: Serine--tRNA ligase (429 aa).

Residue 236–238 (TAE) coordinates L-serine. 267 to 269 (RRE) contacts ATP. E290 contributes to the L-serine binding site. 354-357 (EISS) provides a ligand contact to ATP. L-serine is bound at residue S390.

It belongs to the class-II aminoacyl-tRNA synthetase family. Type-1 seryl-tRNA synthetase subfamily. Homodimer. The tRNA molecule binds across the dimer.

The protein localises to the cytoplasm. The enzyme catalyses tRNA(Ser) + L-serine + ATP = L-seryl-tRNA(Ser) + AMP + diphosphate + H(+). It catalyses the reaction tRNA(Sec) + L-serine + ATP = L-seryl-tRNA(Sec) + AMP + diphosphate + H(+). The protein operates within aminoacyl-tRNA biosynthesis; selenocysteinyl-tRNA(Sec) biosynthesis; L-seryl-tRNA(Sec) from L-serine and tRNA(Sec): step 1/1. In terms of biological role, catalyzes the attachment of serine to tRNA(Ser). Is also able to aminoacylate tRNA(Sec) with serine, to form the misacylated tRNA L-seryl-tRNA(Sec), which will be further converted into selenocysteinyl-tRNA(Sec). The protein is Serine--tRNA ligase of Gloeobacter violaceus (strain ATCC 29082 / PCC 7421).